Consider the following 389-residue polypeptide: Probable protein phosphatase 2C 47 (389 aa).

The PPM-type phosphatase domain maps to 76–346 (RSGSFADIGP…DNLTVIVVCF (271 aa)). Mn(2+) is bound by residues aspartate 120, glycine 121, aspartate 294, and aspartate 337.

This sequence belongs to the PP2C family. Mg(2+) is required as a cofactor. The cofactor is Mn(2+).

The enzyme catalyses O-phospho-L-seryl-[protein] + H2O = L-seryl-[protein] + phosphate. The catalysed reaction is O-phospho-L-threonyl-[protein] + H2O = L-threonyl-[protein] + phosphate. This chain is Probable protein phosphatase 2C 47, found in Oryza sativa subsp. japonica (Rice).